Consider the following 707-residue polypeptide: MNGGGRRRYSSEQLMFDVPANAGGGAGKWGQRGGVRRGDGEIFVSVEPTTPARLRGGEAAAAAAGESPGQRQQLSPGLLDLHAFDTELISDFQVPGIGMYDGAQKFGYGNGGFDDSDPTFAPNKQMSKSTVFAESNFLKAFPEKEKAAPVAKIKVVVRKRPLNKKEISKKEEDIIDIEQQSNSLTVHETKLKVDLTEYVEKHEFVFDAVLDEDVSNDEVYRETVEPVVPAIFNRTKATCFAYGQTGSGKTYTMRPLPLKASQDILRLMHHTYRNQGYQLFVSFFEIYGGKLFDLLNERSKLCMREDGKQKVCIVGLQEYRVSDVETIKELIEKGNATRSTGTTGANEESSRSHAILQLAIKKRVDGNDSKPPRLAGKLSFIDLAGSERGADTTDNDKQTRIEGAEINKSLLALKECIRALDNDQTHIPFRGSKLTEVLRDSFIGDSRTVMISCISPSSGSCEHTLNTLRYADRVKSLSKGSNTKKDLSLAAAPLRESSPSLLASAVPSFSSAEVMNDITERSNFGWTKQQYVKEHQAPTFVDRMQKVKEDTEFSLSNGGYFKEQRTKGSVPVGIAEVPDTVYQQGRQPTRKARDLTSDNNMRNSIAYPIIRRVVPDEDEHLNELLQEEEDLVSAHRKQVEETLDMIKEEMNLLVEADQPGNQLDDYITRLSGILSQKAAGIVDLQARLAQFQRRLNENNVLLYAQCP.

Residues Lys152 to Leu477 enclose the Kinesin motor domain. ATP is bound at residue Gly243–Thr250. A coiled-coil region spans residues Glu619–Ala656.

The protein belongs to the TRAFAC class myosin-kinesin ATPase superfamily. Kinesin family. KIN-13 subfamily.

The sequence is that of Kinesin-like protein KIN-13B from Oryza sativa subsp. japonica (Rice).